A 72-amino-acid polypeptide reads, in one-letter code: Protein RALF-like 36 (72 aa).

An N-terminal signal peptide occupies residues Met-1–Ala-27. Intrachain disulfides connect Cys-43–Cys-51 and Cys-63–Cys-69.

It belongs to the plant rapid alkalinization factor (RALF) family.

Its subcellular location is the secreted. Its function is as follows. Cell signaling peptide that may regulate plant stress, growth, and development. Mediates a rapid alkalinization of extracellular space by mediating a transient increase in the cytoplasmic Ca(2+) concentration leading to a calcium-dependent signaling events through a cell surface receptor and a concomitant activation of some intracellular mitogen-activated protein kinases. This chain is Protein RALF-like 36, found in Arabidopsis thaliana (Mouse-ear cress).